The following is a 514-amino-acid chain: 1-pyrroline-5-carboxylate dehydrogenase (514 aa).

Residues Glu-286 and Cys-320 contribute to the active site.

It belongs to the aldehyde dehydrogenase family. RocA subfamily.

The enzyme catalyses L-glutamate 5-semialdehyde + NAD(+) + H2O = L-glutamate + NADH + 2 H(+). It participates in amino-acid degradation; L-proline degradation into L-glutamate; L-glutamate from L-proline: step 2/2. The protein is 1-pyrroline-5-carboxylate dehydrogenase of Staphylococcus haemolyticus (strain JCSC1435).